The primary structure comprises 220 residues: Adenylate kinase (220 aa).

ATP is bound at residue 10 to 15; it reads GSGKST. The interval 30–59 is NMP; that stretch reads SSGDIIRAEISSRTPLGLEMEKYLSRGDLI. Residues Ser-31, Arg-36, 57-59, 83-86, and Gln-90 contribute to the AMP site; these read DLI and GYPR. An LID region spans residues 124 to 161; it reads GRRICSKCGAVYHIEFNPPKIPGKCDICGGDLIQRPDD. Arg-125 provides a ligand contact to ATP. Zn(2+) contacts are provided by Cys-128 and Cys-131. Residue 134 to 135 coordinates ATP; sequence VY. 2 residues coordinate Zn(2+): Cys-148 and Cys-151. Positions 158 and 169 each coordinate AMP. Residue Gly-197 coordinates ATP.

It belongs to the adenylate kinase family. In terms of assembly, monomer.

The protein localises to the cytoplasm. The enzyme catalyses AMP + ATP = 2 ADP. It functions in the pathway purine metabolism; AMP biosynthesis via salvage pathway; AMP from ADP: step 1/1. Catalyzes the reversible transfer of the terminal phosphate group between ATP and AMP. Plays an important role in cellular energy homeostasis and in adenine nucleotide metabolism. The sequence is that of Adenylate kinase from Pyrococcus horikoshii (strain ATCC 700860 / DSM 12428 / JCM 9974 / NBRC 100139 / OT-3).